The sequence spans 130 residues: Histone H2A (130 aa).

N6-acetyllysine occurs at positions 4 and 7. Q105 carries the post-translational modification N5-methylglutamine. Phosphoserine is present on S127. The [ST]-Q motif motif lies at 127-128 (SQ).

It belongs to the histone H2A family. In terms of assembly, the nucleosome is a histone octamer containing two molecules each of H2A, H2B, H3 and H4 assembled in one H3-H4 heterotetramer and two H2A-H2B heterodimers. The octamer wraps approximately 147 bp of DNA. Post-translationally, phosphorylated to form H2AS128ph (gamma-H2A) in response to DNA double-strand breaks (DSBs) generated by exogenous genotoxic agents and by stalled replication forks. Phosphorylation is dependent on the DNA damage checkpoint kinases MEC1/ATR and TEL1/ATM, spreads on either side of a detected DSB site and may mark the surrounding chromatin for recruitment of proteins required for DNA damage signaling and repair. Gamma-H2A is removed from the DNA prior to the strand invasion-primer extension step of the repair process and subsequently dephosphorylated by PPH3, a component of the histone H2A phosphatase complex (HTP-C). Dephosphorylation is necessary for efficient recovery from the DNA damage checkpoint. In terms of processing, acetylated by ESA1 to form H2AK4ac and H2AK7ac.

The protein resides in the nucleus. The protein localises to the chromosome. Core component of nucleosome which plays a central role in DNA double strand break (DSB) repair. Nucleosomes wrap and compact DNA into chromatin, limiting DNA accessibility to the cellular machineries which require DNA as a template. Histones thereby play a central role in transcription regulation, DNA repair, DNA replication and chromosomal stability. DNA accessibility is regulated via a complex set of post-translational modifications of histones, also called histone code, and nucleosome remodeling. This chain is Histone H2A (HTA1), found in Kluyveromyces lactis (strain ATCC 8585 / CBS 2359 / DSM 70799 / NBRC 1267 / NRRL Y-1140 / WM37) (Yeast).